Reading from the N-terminus, the 389-residue chain is MSTRHTQRTGGRISVRRNEARLAHARARARFDWLLLARGRPSKLYGYASRHRGELIHLPWPPCWCLELHHDPYRDARSATVWGHRWGWPATHVRPRCVQDCALDSCLYVCCGYGEKLQPVGFVKSYVTNSQLDTLRVLLVGKDGAVYVHHMRAARLCRLASSTTEFTRRGLQRDAVTYEEDLELPDQRMCGTNARHLFDVIAAAADEHNLLTVGGLCQTHAGVSCNLLETVGDPWTAVPAARMTLTVPQVQYRLWPEARRDLRRHLYAGHPLGPWLVCGVLSRERETQKPSPPIRTTVGNVPTPGPREVEIAWVVLTLAGPLLAFWPDTGKICRLANSFSTLWKMGPRAMRGHWTYSAPGRHLPGDAWPLCEHVRPQVGKLPRKRAYLD.

It belongs to the Roseolovirus DR6 family.

It is found in the host nucleus. Its function is as follows. Inhibits the host G2/M cell-cycle progression in a p53-independent manner. The protein is G2/M cell-cycle inhibitor DR6 (DR6L) of Homo sapiens (Human).